A 303-amino-acid chain; its full sequence is Oxygen-dependent coproporphyrinogen-III oxidase (303 aa).

A substrate-binding site is contributed by S93. The a divalent metal cation site is built by H97 and H107. The active-site Proton donor is the H107. 109–111 contributes to the substrate binding site; sequence NVR. Residues H149 and H179 each coordinate a divalent metal cation. The segment at 244–279 is important for dimerization; it reads YVEFNLVFDRGTLFGLQSGGRTESILLSMPPLAQWR. Residue 262–264 participates in substrate binding; that stretch reads GGR.

This sequence belongs to the aerobic coproporphyrinogen-III oxidase family. As to quaternary structure, homodimer. A divalent metal cation serves as cofactor.

Its subcellular location is the cytoplasm. The catalysed reaction is coproporphyrinogen III + O2 + 2 H(+) = protoporphyrinogen IX + 2 CO2 + 2 H2O. It functions in the pathway porphyrin-containing compound metabolism; protoporphyrin-IX biosynthesis; protoporphyrinogen-IX from coproporphyrinogen-III (O2 route): step 1/1. In terms of biological role, involved in the heme biosynthesis. Catalyzes the aerobic oxidative decarboxylation of propionate groups of rings A and B of coproporphyrinogen-III to yield the vinyl groups in protoporphyrinogen-IX. The sequence is that of Oxygen-dependent coproporphyrinogen-III oxidase from Bordetella pertussis (strain Tohama I / ATCC BAA-589 / NCTC 13251).